A 567-amino-acid polypeptide reads, in one-letter code: Alpha-glucosidase (567 aa).

A signal peptide spans 1–17; sequence MKAVIVFCLMALSIVDA. Asn88 and Asn123 each carry an N-linked (GlcNAc...) asparagine glycan. Asp223 (nucleophile) is an active-site residue. A glycan (N-linked (GlcNAc...) asparagine) is linked at Asn247. Glu286 acts as the Proton donor in catalysis. Residues Asn290, Asn313, Asn319, Asn499, and Asn507 are each glycosylated (N-linked (GlcNAc...) asparagine).

As to quaternary structure, monomer. Expressed specifically in the hypopharyngeal glands of worker bees. Also found in the brain of worker bees (at protein level).

It carries out the reaction Hydrolysis of terminal, non-reducing (1-&gt;4)-linked alpha-D-glucose residues with release of alpha-D-glucose.. Converts sucrose in nectar to glucose and fructose. This Apis mellifera (Honeybee) protein is Alpha-glucosidase.